The sequence spans 192 residues: MLSFLSSNLSSTRQSLAQVLNFALVLSTAFMLWKGLSVFTASSSPIVVVLSGSMEPAFQRGDLLFLWNRSPRAELGEIVVYNVRGKDIPIVHRVVRTFPEVEGKAKKVKEITGTSSIPPNMLLTKGDNNVADDTELYAKNQDFLHREEDIVGSVRGYMPMVGYVTIMLSEHPWLKTVLLGIMGLMVILQREQ.

Topologically, residues 1-18 (MLSFLSSNLSSTRQSLAQ) are cytoplasmic. The chain crosses the membrane as a helical; Signal-anchor for type II membrane protein span at residues 19–39 (VLNFALVLSTAFMLWKGLSVF). Residues 40 to 192 (TASSSPIVVV…GLMVILQREQ (153 aa)) are Lumenal-facing. Catalysis depends on charge relay system residues Ser53, His92, and Asp133. The interval 177 to 188 (VLLGIMGLMVIL) is C-terminal short (CTS) helix.

It belongs to the peptidase S26B family. Component of the signal peptidase complex (SPC) composed of a catalytic subunit SEC11 and three accessory subunits SPC1, SPC2 and SPC3. The complex induces a local thinning of the ER membrane which is used to measure the length of the signal peptide (SP) h-region of protein substrates. This ensures the selectivity of the complex towards h-regions shorter than 18-20 amino acids. SPC associates with the translocon complex.

It localises to the endoplasmic reticulum membrane. It catalyses the reaction Cleavage of hydrophobic, N-terminal signal or leader sequences from secreted and periplasmic proteins.. Functionally, catalytic component of the signal peptidase complex (SPC) which catalyzes the cleavage of N-terminal signal sequences from nascent proteins as they are translocated into the lumen of the endoplasmic reticulum. Specifically cleaves N-terminal signal peptides that contain a hydrophobic alpha-helix (h-region) shorter than 18-20 amino acids. The polypeptide is Signal peptidase complex catalytic subunit sec11 (sec11) (Aspergillus clavatus (strain ATCC 1007 / CBS 513.65 / DSM 816 / NCTC 3887 / NRRL 1 / QM 1276 / 107)).